Consider the following 442-residue polypeptide: Protein PhoH2 (442 aa).

Residues 3–135 form the PINc domain; sequence KIYVLDTNVL…LVSKDVLVRV (133 aa). ATP is bound at residue 259 to 266; sequence GKAGTGKT.

It in the N-terminal section; belongs to the PINc/VapC protein family. The protein in the C-terminal section; belongs to the PhoH family.

The enzyme catalyses n ATP + n H2O + wound RNA = n ADP + n phosphate + unwound RNA.. It catalyses the reaction ATP + H2O = ADP + phosphate + H(+). The catalysed reaction is GTP + H2O = GDP + phosphate + H(+). Functionally, unwinds and/or cleaves 5'-tailed RNA in vitro. Has ATPase and GTPase activities. Unlike the protein in mycobacteria there does not seem to be an antitoxin gene upstream, suggesting this is not a toxin-antitoxin system. This Bacillus subtilis (strain 168) protein is Protein PhoH2.